Reading from the N-terminus, the 191-residue chain is Auxin-responsive protein IAA32 (191 aa).

The short motif at 32–36 is the EAR-like (transcriptional repression) element; sequence LGLSL. Residues 98-184 enclose the PB1 domain; the sequence is YAYVKVNLDG…SVDRMRIARR (87 aa).

It belongs to the Aux/IAA family. In terms of assembly, homodimers and heterodimers.

The protein resides in the nucleus. Aux/IAA proteins are short-lived transcriptional factors that function as repressors of early auxin response genes at low auxin concentrations. Repression is thought to result from the interaction with auxin response factors (ARFs), proteins that bind to the auxin-responsive promoter element (AuxRE). Formation of heterodimers with ARF proteins may alter their ability to modulate early auxin response genes expression. In Arabidopsis thaliana (Mouse-ear cress), this protein is Auxin-responsive protein IAA32.